A 415-amino-acid polypeptide reads, in one-letter code: Histidine--tRNA ligase (415 aa).

The protein belongs to the class-II aminoacyl-tRNA synthetase family. As to quaternary structure, homodimer.

It is found in the cytoplasm. It carries out the reaction tRNA(His) + L-histidine + ATP = L-histidyl-tRNA(His) + AMP + diphosphate + H(+). This chain is Histidine--tRNA ligase, found in Clostridium botulinum (strain Loch Maree / Type A3).